Reading from the N-terminus, the 382-residue chain is Proton extrusion protein PxcA (382 aa).

The next 4 helical transmembrane spans lie at 156–176 (TLIS…VQQV), 257–277 (AVKN…VCLF), 305–325 (IILF…TVLL), and 340–360 (FILL…KYWI).

It belongs to the CemA family.

It is found in the cell inner membrane. Required for H(+) efflux immediately after light irradiation to form a rapid H(+) concentration gradient across the thylakoid membranes. Together with PxcL, contributes to transient H(+) uptake following dark to light transition. The polypeptide is Proton extrusion protein PxcA (Synechococcus sp. (strain CC9311)).